A 1703-amino-acid chain; its full sequence is Arf-GAP with Rho-GAP domain, ANK repeat and PH domain-containing protein 2 (1703 aa).

In terms of domain architecture, SAM spans 6–70; that stretch reads EVNADIRDFL…LKQLQMIFSK (65 aa). A Phosphotyrosine modification is found at Y77. Disordered stretches follow at residues 84 to 132, 191 to 232, and 286 to 319; these read KNGS…LSEG, EEHT…NGTN, and PVPEIPGSTKSIPGSYFRDRRSNTTSAGKSLTLK. 3 stretches are compositionally biased toward polar residues: residues 85 to 103, 123 to 132, and 197 to 214; these read NGSTTKEQQHSDPSSSTHT, MVTTSTLSEG, and GNLTSEDSSKALSTNTEC. Low complexity predominate over residues 222-232; that stretch reads TSGTHSGNGTN. The span at 308–319 shows a compositional bias: polar residues; sequence NTTSAGKSLTLK. 2 PH domains span residues 480–572 and 585–677; these read AKEK…SALK and APEK…QSIA. The Arf-GAP domain maps to 674–809; sequence QSIAETLSDY…TLLASLTKEE (136 aa). A C4-type zinc finger spans residues 698 to 721; sequence CADCKAPDPDWASINLCVVICKKC. PH domains lie at 899–1001 and 1012–1110; these read QTAA…KRFV and DYDL…KAAG. The region spanning 1114 to 1295 is the Rho-GAP domain; it reads NALQDQQLCK…DLINNYVEIF (182 aa). The region spanning 1324–1418 is the Ras-associating domain; that stretch reads GDLLIEVFVE…AYLVVKRFLT (95 aa). Residues 1428-1531 enclose the PH 5 domain; it reads KSIKEGILKL…WMASIFIAQH (104 aa). Phosphoserine is present on S1627. Disordered stretches follow at residues 1633 to 1670 and 1684 to 1703; these read DTEAEGPHGLPKAYKGPKTLKKTEERNSKATLDADPKL and RSRPLHKELPDEQTLQKEVK. Basic and acidic residues-rich tracts occupy residues 1653 to 1670 and 1688 to 1703; these read KKTEERNSKATLDADPKL and LHKELPDEQTLQKEVK.

Its subcellular location is the cytoplasm. Phosphatidylinositol 3,4,5-trisphosphate-dependent GTPase-activating protein that modulates actin cytoskeleton remodeling by regulating ARF and RHO family members. Is activated by phosphatidylinositol 3,4,5-trisphosphate (PtdIns(3,4,5)P3) binding. Can be activated by phosphatidylinositol 3,4-bisphosphate (PtdIns(3,4,5)P2) binding, albeit with lower efficiency. The chain is Arf-GAP with Rho-GAP domain, ANK repeat and PH domain-containing protein 2 (Arap2) from Mus musculus (Mouse).